We begin with the raw amino-acid sequence, 118 residues long: Non-specific lipid-transfer protein (118 aa).

The signal sequence occupies residues 1–27 (MGVSKVAIAVAVMLMVVVINHPAVVEG). Disulfide bonds link cysteine 30/cysteine 75, cysteine 40/cysteine 54, cysteine 55/cysteine 100, and cysteine 77/cysteine 114.

This sequence belongs to the plant LTP family. In terms of processing, disulfide bonds.

Its function is as follows. Plant non-specific lipid-transfer proteins transfer phospholipids as well as galactolipids across membranes. May play a role in wax or cutin deposition in the cell walls of expanding epidermal cells and certain secretory tissues. This is Non-specific lipid-transfer protein from Apium graveolens (Celery).